A 78-amino-acid chain; its full sequence is Large ribosomal subunit protein bL28 (78 aa).

It belongs to the bacterial ribosomal protein bL28 family.

The protein is Large ribosomal subunit protein bL28 of Tropheryma whipplei (strain TW08/27) (Whipple's bacillus).